The following is a 346-amino-acid chain: Autophagy-related protein 3 (346 aa).

A flexible region region spans residues 85–161; that stretch reads DFAGDAGHEE…DDDDEAIIRA (77 aa). Cysteine 238 (glycyl thioester intermediate) is an active-site residue. The handle region stretch occupies residues 242–322; that stretch reads SVMKTLLDRA…DQEVAIRVDQ (81 aa).

This sequence belongs to the ATG3 family. In terms of assembly, monomer. Interacts with apg-6/atg8 through an intermediate thioester bond through the C-terminal Gly of apg-6/atg8. Also interacts with the 40 amino acid C-terminal region of the E1-like apg-5/atg7 enzyme. Also interacts with the atg12-apg-4/atg5 conjugate.

The protein localises to the cytoplasm. Its function is as follows. E2 conjugating enzyme required for the cytoplasm to vacuole transport (Cvt) and autophagy. Required for selective autophagic degradation of the nucleus (nucleophagy) as well as for mitophagy which contributes to regulate mitochondrial quantity and quality by eliminating the mitochondria to a basal level to fulfill cellular energy requirements and preventing excess ROS production. Responsible for the E2-like covalent binding of phosphatidylethanolamine to the C-terminal Gly of apg-6/atg8. The atg12-apg-4/atg5 conjugate plays a role of an E3 and promotes the transfer of apg-6/atg8 from apg-3/atg3 to phosphatidylethanolamine (PE). This step is required for the membrane association of apg-6/atg8. The formation of the apg-6/atg8-phosphatidylethanolamine conjugate is essential for autophagy and for the cytoplasm to vacuole transport (Cvt). The apg-6/atg8-PE conjugate mediates tethering between adjacent membranes and stimulates membrane hemifusion, leading to expansion of the autophagosomal membrane during autophagy. This Neurospora crassa (strain ATCC 24698 / 74-OR23-1A / CBS 708.71 / DSM 1257 / FGSC 987) protein is Autophagy-related protein 3 (apg-3).